Reading from the N-terminus, the 420-residue chain is Disease resistance protein CHS1 (420 aa).

The TIR domain maps to 12–167; the sequence is RELDVFLSFS…QIADDIRLMF (156 aa). Glutamate 86 is a catalytic residue. The NB-ARC domain maps to 185 to 406; it reads MKALYALLAL…KDIKEVWKIM (222 aa).

As to expression, mostly expressed in leaves and flowers (mainly in sepals), and, at a lower intensity, in stems. Present at low levels in roots and seeds.

It is found in the cytoplasm. Its subcellular location is the nucleus. It catalyses the reaction NAD(+) + H2O = ADP-D-ribose + nicotinamide + H(+). Confers resistance to low temperatures by limiting chloroplast damage and cell death, thus maintaining growth homeostasis. Regulates steryl-esters and sterols accumulation. Limits leaf necrosis associated with virulent bacterial infection (e.g. Pseudomonas syringae pv. tomato DC3000). This is Disease resistance protein CHS1 from Arabidopsis thaliana (Mouse-ear cress).